Reading from the N-terminus, the 61-residue chain is Alpha-conotoxin PnIB (61 aa).

The N-terminal stretch at 1–21 (MGMRMMFTVFLLVVLATTVVS) is a signal peptide. Residues 22–44 (FTSDRASDDGNAAASDLIALTIK) constitute a propeptide that is removed on maturation. Intrachain disulfides connect Cys46-Cys52 and Cys47-Cys60. Residues 48-50 (SLP) are ser-Xaa-Pro motif, crucial for potent interaction with nAChR. Sulfotyrosine is present on Tyr59. Position 60 is a cysteine amide (Cys60).

The protein belongs to the conotoxin A superfamily. Expressed by the venom duct.

The protein resides in the secreted. Functionally, alpha-conotoxins act on postsynaptic membranes, they bind to the nicotinic acetylcholine receptors (nAChR) and thus inhibit them. This toxin blocks mammalian nAChRs (alpha-7/CHRNA7 &gt; alpha-3-beta-2/CHRNA3-CHRNB2). The polypeptide is Alpha-conotoxin PnIB (Conus pennaceus (Feathered cone)).